The primary structure comprises 266 residues: Putative carbamate hydrolase RutD (266 aa).

One can recognise an AB hydrolase-1 domain in the interval 14–238; it reads PVVVLSAGLG…RVEMPWGGHA (225 aa).

This sequence belongs to the AB hydrolase superfamily. Hydrolase RutD family.

The enzyme catalyses carbamate + 2 H(+) = NH4(+) + CO2. Its function is as follows. Involved in pyrimidine catabolism. May facilitate the hydrolysis of carbamate, a reaction that can also occur spontaneously. The chain is Putative carbamate hydrolase RutD from Klebsiella pneumoniae (strain 342).